The sequence spans 258 residues: UPF0246 protein Shew_1093 (258 aa).

Belongs to the UPF0246 family.

The sequence is that of UPF0246 protein Shew_1093 from Shewanella loihica (strain ATCC BAA-1088 / PV-4).